Consider the following 120-residue polypeptide: U3-hexatoxin-Hi1a (120 aa).

The first 19 residues, 1 to 19, serve as a signal peptide directing secretion; it reads MKLLYFFVVITVLVAVAAA. Positions 20-51 are excised as a propeptide; it reads LPAKTEEQIAAEENQLVEDLVQYAGTRLTRKR.

Belongs to the neurotoxin 25 family. F7 subfamily. Post-translationally, contains 4 disulfide bonds. As to expression, expressed by the venom gland.

It is found in the secreted. Weak insecticidal toxin with probable ion channel impairing activity. In vivo, induces paralysis when injected into sheep blowflies (L.cuprina). Shows weak toxicity, since it is only toxic at high doses, and flies recover within 24 hours. The polypeptide is U3-hexatoxin-Hi1a (Hadronyche infensa (Fraser island funnel-web spider)).